The following is a 518-amino-acid chain: Ethanolamine kinase (518 aa).

The span at 1 to 19 shows a compositional bias: polar residues; that stretch reads MGTETKSNSYTGQISTSGG. Positions 1-88 are disordered; sequence MGTETKSNSY…DIRAKPEDKS (88 aa). Positions 33-68 are enriched in low complexity; it reads QTVNQQTLSLSQSNQVQNQLNSHSNSNSYPNPSGSE. The segment covering 69–88 has biased composition (basic and acidic residues); that stretch reads NKNENEQNSRDIRAKPEDKS. Phosphoserine occurs at positions 190 and 194.

It belongs to the choline/ethanolamine kinase family.

The protein resides in the cytoplasm. It carries out the reaction ethanolamine + ATP = phosphoethanolamine + ADP + H(+). It functions in the pathway phospholipid metabolism; phosphatidylethanolamine biosynthesis; phosphatidylethanolamine from ethanolamine: step 1/3. Highly specific for ethanolamine phosphorylation. May be a rate-controlling step in phosphatidylethanolamine biosynthesis. This is Ethanolamine kinase (eas) from Drosophila melanogaster (Fruit fly).